Consider the following 1323-residue polypeptide: DNA-directed RNA polymerase subunit beta' (1323 aa).

The Zn(2+) site is built by cysteine 60, cysteine 62, cysteine 75, and cysteine 78. Mg(2+)-binding residues include aspartate 535, aspartate 537, and aspartate 539. Residues cysteine 894, cysteine 977, cysteine 984, and cysteine 987 each coordinate Zn(2+).

This sequence belongs to the RNA polymerase beta' chain family. The RNAP catalytic core consists of 2 alpha, 1 beta, 1 beta' and 1 omega subunit. When a sigma factor is associated with the core the holoenzyme is formed, which can initiate transcription. Requires Mg(2+) as cofactor. The cofactor is Zn(2+).

It catalyses the reaction RNA(n) + a ribonucleoside 5'-triphosphate = RNA(n+1) + diphosphate. Its function is as follows. DNA-dependent RNA polymerase catalyzes the transcription of DNA into RNA using the four ribonucleoside triphosphates as substrates. The protein is DNA-directed RNA polymerase subunit beta' of Corynebacterium jeikeium (strain K411).